The chain runs to 538 residues: Calcyphosin-2 (538 aa).

The segment covering 134-146 has biased composition (polar residues); sequence RNAENTKSNVTHK. The segment at 134 to 154 is disordered; the sequence is RNAENTKSNVTHKQSPRNKID. EF-hand domains are found at residues 426-461, 462-497, and 498-533; these read RILTGLGKYFQQLDKEGNGLLDKADFKQALKVFHLE, VSEKDFESAWLILNDNGNGKVDYGEFKRGIIGEMNE, and YRKSYVRKAFMKLDFNKSGSVPIINIRKCYCAKKHS. 12 residues coordinate Ca(2+): aspartate 439, asparagine 443, aspartate 450, asparagine 477, asparagine 479, lysine 481, glutamate 486, aspartate 511, asparagine 513, serine 515, serine 517, and asparagine 522.

In terms of tissue distribution, abundantly expressed in many tissues. Expressed in brain, colon, heart, kidney, liver, lung, liver, pancreas, placenta, skeletal muscle, testis and thymus. Highest expression in colon, testis, lung, placenta and brain.

The protein is Calcyphosin-2 of Homo sapiens (Human).